The chain runs to 373 residues: tRNA-specific 2-thiouridylase MnmA (373 aa).

Residues 12-19 and Met-38 contribute to the ATP site; that span reads GMSGGVDS. The segment at 98-100 is interaction with target base in tRNA; the sequence is NPD. Residue Cys-103 is the Nucleophile of the active site. Cys-103 and Cys-200 are joined by a disulfide. Position 127 (Gly-127) interacts with ATP. Residues 150–152 form an interaction with tRNA region; sequence KDQ. Cys-200 serves as the catalytic Cysteine persulfide intermediate. The tract at residues 312-313 is interaction with tRNA; the sequence is RY.

The protein belongs to the MnmA/TRMU family.

Its subcellular location is the cytoplasm. It carries out the reaction S-sulfanyl-L-cysteinyl-[protein] + uridine(34) in tRNA + AH2 + ATP = 2-thiouridine(34) in tRNA + L-cysteinyl-[protein] + A + AMP + diphosphate + H(+). Catalyzes the 2-thiolation of uridine at the wobble position (U34) of tRNA, leading to the formation of s(2)U34. This is tRNA-specific 2-thiouridylase MnmA from Streptococcus pyogenes serotype M1.